Consider the following 528-residue polypeptide: GMP synthase [glutamine-hydrolyzing] (528 aa).

The region spanning 22-212 is the Glutamine amidotransferase type-1 domain; it reads AILVLDFGSQ…VFKICQSQTN (191 aa). The Nucleophile role is filled by Cys-99. Active-site residues include His-186 and Glu-188. One can recognise a GMPS ATP-PPase domain in the interval 213–403; that stretch reads WSLESNVETI…LGIKKEALYR (191 aa). ATP is bound at residue 240–246; that stretch reads SGGTDSL.

In terms of assembly, homodimer.

It carries out the reaction XMP + L-glutamine + ATP + H2O = GMP + L-glutamate + AMP + diphosphate + 2 H(+). It participates in purine metabolism; GMP biosynthesis; GMP from XMP (L-Gln route): step 1/1. Functionally, catalyzes the synthesis of GMP from XMP. In Borrelia garinii subsp. bavariensis (strain ATCC BAA-2496 / DSM 23469 / PBi) (Borreliella bavariensis), this protein is GMP synthase [glutamine-hydrolyzing].